The sequence spans 160 residues: 2-C-methyl-D-erythritol 2,4-cyclodiphosphate synthase (160 aa).

A divalent metal cation is bound by residues Asp11 and His13. 4-CDP-2-C-methyl-D-erythritol 2-phosphate contacts are provided by residues 11–13 (DVH) and 37–38 (HS). His45 provides a ligand contact to a divalent metal cation. 4-CDP-2-C-methyl-D-erythritol 2-phosphate-binding positions include 59-61 (DIG), 64-68 (FPDTD), 135-138 (TTTE), Phe142, and Arg145.

The protein belongs to the IspF family. In terms of assembly, homotrimer. Requires a divalent metal cation as cofactor.

It carries out the reaction 4-CDP-2-C-methyl-D-erythritol 2-phosphate = 2-C-methyl-D-erythritol 2,4-cyclic diphosphate + CMP. It functions in the pathway isoprenoid biosynthesis; isopentenyl diphosphate biosynthesis via DXP pathway; isopentenyl diphosphate from 1-deoxy-D-xylulose 5-phosphate: step 4/6. Its function is as follows. Involved in the biosynthesis of isopentenyl diphosphate (IPP) and dimethylallyl diphosphate (DMAPP), two major building blocks of isoprenoid compounds. Catalyzes the conversion of 4-diphosphocytidyl-2-C-methyl-D-erythritol 2-phosphate (CDP-ME2P) to 2-C-methyl-D-erythritol 2,4-cyclodiphosphate (ME-CPP) with a corresponding release of cytidine 5-monophosphate (CMP). This chain is 2-C-methyl-D-erythritol 2,4-cyclodiphosphate synthase, found in Alcanivorax borkumensis (strain ATCC 700651 / DSM 11573 / NCIMB 13689 / SK2).